The chain runs to 147 residues: Transcription elongation factor Spt5 (147 aa).

Residues 91–122 (KGDVVEIIAGPFKGERAKVIRVDKHKEEVTLE) form the KOW domain.

The protein belongs to the archaeal Spt5 family. In terms of assembly, heterodimer composed of Spt4 and Spt5. Interacts with RNA polymerase (RNAP). Forms a homodimer in solution.

Functionally, stimulates transcription elongation. The sequence is that of Transcription elongation factor Spt5 from Methanocaldococcus jannaschii (strain ATCC 43067 / DSM 2661 / JAL-1 / JCM 10045 / NBRC 100440) (Methanococcus jannaschii).